Here is a 498-residue protein sequence, read N- to C-terminus: Probable dipeptidase B (498 aa).

Residue Cys-26 is part of the active site.

Belongs to the peptidase C69 family.

It catalyses the reaction an L-aminoacyl-L-amino acid + H2O = 2 an L-alpha-amino acid. This Streptococcus pyogenes serotype M1 protein is Probable dipeptidase B (pepDB).